The following is a 1587-amino-acid chain: Mediator of RNA polymerase II transcription subunit 23 (1587 aa).

2 disordered regions span residues 1374 to 1484 and 1567 to 1587; these read SQSE…QLQH and QHQQ…QQPH. The span at 1385-1404 shows a compositional bias: basic and acidic residues; it reads PPEKEKSPEKEKEQEQEQHV. Residues 1387–1404 are acidic; it reads EKEKSPEKEKEQEQEQHV. Over residues 1410–1426 the composition is skewed to polar residues; the sequence is LESTPSVSSLPQMQHHL. Residues 1430 to 1450 are compositionally biased toward low complexity; it reads PLLPSHQMMPPPQQHSSSLQH. The segment covering 1463–1484 has biased composition (polar residues); it reads DTSQHQTIQQQSNHPTQQQLQH. The segment covering 1567 to 1576 has biased composition (low complexity); that stretch reads QHQQYMQQQQ. Positions 1577–1587 are enriched in basic residues; that stretch reads QHHHQHQQQPH.

It belongs to the Mediator complex subunit 23 family. Component of the Mediator complex. Interacts with let-19/mdt-13.

Its subcellular location is the nucleus. Functionally, component of the Mediator complex, a coactivator involved in regulated gene transcription of nearly all RNA polymerase II-dependent genes. Mediator functions as a bridge to convey information from gene-specific regulatory proteins to the basal RNA polymerase II transcription machinery. Mediator is recruited to promoters by direct interactions with regulatory proteins and serves as a scaffold for the assembly of a functional pre-initiation complex with RNA polymerase II and the general transcription factors. Functions downstream of receptor let-23 and let-60/Ras during vulval induction likely by down-regulating the expression of phosphatase dep-1 and lin-12/Notch in vulva precursor cell descendants with a primary cell fate. Acts to repress beta-catenin target genes. Required for asymmetric division of T-cells. Plays a role in responses to M.nematophilum-mediated bacterial infection by promoting tail swelling and preventing constipation. The chain is Mediator of RNA polymerase II transcription subunit 23 (sur-2) from Caenorhabditis elegans.